The sequence spans 226 residues: V-type proton ATPase subunit E (226 aa).

This sequence belongs to the V-ATPase E subunit family. In terms of assembly, V-ATPase is a heteromultimeric enzyme made up of two complexes: the ATP-hydrolytic V1 complex and the proton translocation V0 complex. The V1 complex consists of three catalytic AB heterodimers that form a heterohexamer, three peripheral stalks each consisting of EG heterodimers, one central rotor including subunits D and F, and the regulatory subunits C and H. The proton translocation complex V0 consists of the proton transport subunit a, a ring of proteolipid subunits c9c'', rotary subunit d, subunits e and f, and the accessory subunits vah-19/Ac45 and vah-20/PRR. Expressed in the excretory cell and syncytial hypodermal cells (at protein level). Expressed in the intestine (at protein level).

The protein resides in the cytoplasm. Its subcellular location is the apical cell membrane. Its function is as follows. Subunit of the V1 complex of vacuolar(H+)-ATPase (V-ATPase), a multisubunit enzyme composed of a peripheral complex (V1) that hydrolyzes ATP and a membrane integral complex (V0) that translocates protons. V-ATPase is responsible for acidifying and maintaining the pH of intracellular compartments and in some cell types, is targeted to the plasma membrane, where it is responsible for acidifying the extracellular environment. Regulates pH homeostasis in the intestine. Probably by regulating cytoplasmic pH, required for cell survival in the intestine and hypodermis. Involved in receptor-mediated endocytosis. Involved in embryogenesis and larval development. This Caenorhabditis elegans protein is V-type proton ATPase subunit E.